Here is a 1043-residue protein sequence, read N- to C-terminus: MELQKGKGAAAAAAAASGAAGGGGGGAGAGAPGGGRLLLSTSLDAKDELEERLERCMSIVTSMTAGVSEREANDALNAYVCKGLPQHEEICLGLFTLILTEPAQAQKCYRDLALVSRDGMNIVLNKINQILMEKYLKLQDTCRTQLVWLVRELVKSGVLGADGVCMTFMKQIAGGDVTAKNIWLAESVLDILTEQREWVLKSSILIAMAVYTYLRLIVDHHGTAQLQALRQKEVDFCISLLRERFMECLMIGRDLVRLLQNVARIPEFELLWKDIIHNPQALSPQFTGILQLLQSRTSRKFLACRLTPDMETKLLFMTSRVRFGQQKRYQDWFQRQYLSTPDSQSLRCDLIRYICGVVHPSNEVLSSDILPRWAIIGWLLTACTSNVAASNAKLALFYDWLFFSPDKDSIMNIEPAILVMHHSMKPHPAITATLLDFMCRIIPNFYPPLEGHVRQGVFSSLNHIVEKRVLAHLAPLFDNPKLDKELRAMLREKFPEFCSSPSPPVEVKIEEPVSMEMDNHMSDKDESCYDNAEAAFSDDEEDLNSKGKKREFRFHPIKETVVEEPVDITPYLDQLDESLRDKVLQLQKGSDTEAQCEVMQEIVDQVLEEDFDSEQLSVLASCLQELFKAHFRGEVLPEEITEESLEESVGKPLYLIFRNLCQMQEDNSSFSLLLDLLSELYQKQPKIGYHLLYYLRASKAAAGKMNLYESFAQATQLGDLHTCLMMDMKACQEDDVRLLCHLTPSIYTEFPDETLRSGELLNMIVAVIDSAQLQELVCHVMMGNLVMFRKDSVLNILIQSLDWETFEQYCAWQLFLAHNIPLETIIPILQHLKYKEHPEALSCLLLQLRREKPSEEMVKMVLSRPCHPDDQFTTSILRHWCMKHDELLAERIKSLLIKNNSLPRKRQSLRSSSSKLAQLTLEQILEHLDNLRLNLTNTKQNFFSQTPILQALQHVQASCDEAHKMKFSDLFSLAEEYEDSSTKPPKSRRKAALSSPRSRKNATQPPNAEEESGSSSASEEEDTKPKPTKRKRRGSSAVGSDSD.

Methionine 1 is subject to N-acetylmethionine. A phosphoserine mark is found at serine 502, serine 537, and serine 995. Residues 977 to 1043 (YEDSSTKPPK…GSSAVGSDSD (67 aa)) form a disordered region. The segment covering 1008-1022 (AEEESGSSSASEEED) has biased composition (acidic residues).

The protein belongs to the Integrator subunit 3 family. Component of the Integrator complex, composed of core subunits INTS1, INTS2, INTS3, INTS4, INTS5, INTS6, INTS7, INTS8, INTS9/RC74, INTS10, INTS11/CPSF3L, INTS12, INTS13, INTS14 and INTS15. The core complex associates with protein phosphatase 2A subunits PPP2CA and PPP2R1A, to form the Integrator-PP2A (INTAC) complex. Component of the SOSS complex, composed of SOSS-B (SOSS-B1/NABP2 or SOSS-B2/NABP1), SOSS-A/INTS3 and SOSS-C/INIP. SOSS complexes containing SOSS-B1/NABP2 are more abundant than complexes containing SOSS-B2/NABP1. Interacts with SOSS-B1/NABP2, SOSS-B2/NABP1 and SOSS-C/INIP; the interaction is direct. Interacts with NBN/NBS1.

It is found in the nucleus. The protein localises to the cytoplasm. Component of the integrator complex, a multiprotein complex that terminates RNA polymerase II (Pol II) transcription in the promoter-proximal region of genes. The integrator complex provides a quality checkpoint during transcription elongation by driving premature transcription termination of transcripts that are unfavorably configured for transcriptional elongation: the complex terminates transcription by (1) catalyzing dephosphorylation of the C-terminal domain (CTD) of Pol II subunit POLR2A/RPB1 and SUPT5H/SPT5, (2) degrading the exiting nascent RNA transcript via endonuclease activity and (3) promoting the release of Pol II from bound DNA. The integrator complex is also involved in terminating the synthesis of non-coding Pol II transcripts, such as enhancer RNAs (eRNAs), small nuclear RNAs (snRNAs), telomerase RNAs and long non-coding RNAs (lncRNAs). Within the integrator complex, INTS3 is involved in the post-termination step: INTS3 binds INTS7 in the open conformation of integrator complex and prevents the rebinding of Pol II to the integrator after termination cycle. Mediates recruitment of cytoplasmic dynein to the nuclear envelope, probably as component of the integrator complex. Functionally, component of the SOSS complex, a multiprotein complex that functions downstream of the MRN complex to promote DNA repair and G2/M checkpoint. The SOSS complex associates with single-stranded DNA at DNA lesions and influences diverse endpoints in the cellular DNA damage response including cell-cycle checkpoint activation, recombinational repair and maintenance of genomic stability. The SOSS complex is required for efficient homologous recombination-dependent repair of double-strand breaks (DSBs) and ATM-dependent signaling pathways. In the SOSS complex, it is required for the assembly of the complex and for stabilization of the complex at DNA damage sites. This is Integrator complex subunit 3 (INTS3) from Pongo abelii (Sumatran orangutan).